We begin with the raw amino-acid sequence, 87 residues long: Large ribosomal subunit protein bL27 (87 aa).

The disordered stretch occupies residues 1–24 (MATKKAGGSSRNGRDSAGRRLGVK).

The protein belongs to the bacterial ribosomal protein bL27 family.

The protein is Large ribosomal subunit protein bL27 of Rickettsia massiliae (strain Mtu5).